We begin with the raw amino-acid sequence, 325 residues long: Quinolinate synthase (325 aa).

Iminosuccinate-binding residues include His41 and Ser58. Cys103 contacts [4Fe-4S] cluster. Iminosuccinate contacts are provided by residues Tyr129 to Asn131 and Ser146. Position 189 (Cys189) interacts with [4Fe-4S] cluster. Iminosuccinate-binding positions include His215–Glu217 and Thr232. Cys282 provides a ligand contact to [4Fe-4S] cluster.

It belongs to the quinolinate synthase family. Type 2 subfamily. [4Fe-4S] cluster is required as a cofactor.

It is found in the cytoplasm. It carries out the reaction iminosuccinate + dihydroxyacetone phosphate = quinolinate + phosphate + 2 H2O + H(+). Its pathway is cofactor biosynthesis; NAD(+) biosynthesis; quinolinate from iminoaspartate: step 1/1. Functionally, catalyzes the condensation of iminoaspartate with dihydroxyacetone phosphate to form quinolinate. This chain is Quinolinate synthase, found in Rippkaea orientalis (strain PCC 8801 / RF-1) (Cyanothece sp. (strain PCC 8801)).